A 184-amino-acid chain; its full sequence is ATP synthase subunit b, chloroplastic (184 aa).

The helical transmembrane segment at 27 to 49 (LATNLINLSVVFGVLIFFGKGVL) threads the bilayer.

This sequence belongs to the ATPase B chain family. In terms of assembly, F-type ATPases have 2 components, F(1) - the catalytic core - and F(0) - the membrane proton channel. F(1) has five subunits: alpha(3), beta(3), gamma(1), delta(1), epsilon(1). F(0) has four main subunits: a(1), b(1), b'(1) and c(10-14). The alpha and beta chains form an alternating ring which encloses part of the gamma chain. F(1) is attached to F(0) by a central stalk formed by the gamma and epsilon chains, while a peripheral stalk is formed by the delta, b and b' chains.

The protein localises to the plastid. It localises to the chloroplast thylakoid membrane. Functionally, f(1)F(0) ATP synthase produces ATP from ADP in the presence of a proton or sodium gradient. F-type ATPases consist of two structural domains, F(1) containing the extramembraneous catalytic core and F(0) containing the membrane proton channel, linked together by a central stalk and a peripheral stalk. During catalysis, ATP synthesis in the catalytic domain of F(1) is coupled via a rotary mechanism of the central stalk subunits to proton translocation. In terms of biological role, component of the F(0) channel, it forms part of the peripheral stalk, linking F(1) to F(0). The protein is ATP synthase subunit b, chloroplastic of Aethionema cordifolium (Lebanon stonecress).